Consider the following 435-residue polypeptide: Tektin-4 (435 aa).

Basic and acidic residues predominate over residues 60-69; the sequence is DQSERQRHES. The tract at residues 60–96 is disordered; sequence DQSERQRHESQQLATETQALAQRTQQDSTRTVGERLQ. The segment covering 70-85 has biased composition (low complexity); that stretch reads QQLATETQALAQRTQQ. Coiled-coil stretches lie at residues 102–180, 310–336, and 363–411; these read KSEL…LLKR, LHKTLREITDQEHNVAALKQAIKDKEA, and FRLL…TNSL.

The protein belongs to the tektin family. As to quaternary structure, microtubule inner protein component of sperm flagellar doublet microtubules. Ubiquitinated, leading to its degradation. Deubiquitinated by USP16, promoting its stability. In terms of tissue distribution, strongly expressed in spermatozoa. Also detected at low levels in pancreas. Expressed in airway epithelial cells.

It is found in the cytoplasm. The protein localises to the cytoskeleton. The protein resides in the cilium axoneme. Its subcellular location is the flagellum axoneme. Functionally, microtubule inner protein (MIP) part of the dynein-decorated doublet microtubules (DMTs) in cilia and flagellar axoneme. Forms filamentous polymers in the walls of ciliary and flagellar microtubules. Contributes to normal sperm motility. The protein is Tektin-4 of Homo sapiens (Human).